Here is a 1486-residue protein sequence, read N- to C-terminus: Chromosome partition protein MukB (1486 aa).

34–41 (GGNGAGKS) is a binding site for ATP. 3 coiled-coil regions span residues 326–418 (LEAD…QYNQ), 444–480 (LETFQAKELEATEKMLSLEQKMSMAQTAHSQFEQAYQ), and 509–603 (RHLA…RAPV). The flexible hinge stretch occupies residues 666–783 (PGGSEDQRLN…EVPLFGRAAR (118 aa)). Coiled-coil stretches lie at residues 835–923 (EAEI…AKLE), 977–1115 (EMLS…TAKA), and 1209–1266 (VEAI…QNVS).

This sequence belongs to the SMC family. MukB subfamily. As to quaternary structure, homodimerization via its hinge domain. Binds to DNA via its C-terminal region. Interacts, and probably forms a ternary complex, with MukE and MukF via its C-terminal region. The complex formation is stimulated by calcium or magnesium. Interacts with tubulin-related protein FtsZ.

It localises to the cytoplasm. It is found in the nucleoid. Plays a central role in chromosome condensation, segregation and cell cycle progression. Functions as a homodimer, which is essential for chromosome partition. Involved in negative DNA supercoiling in vivo, and by this means organize and compact chromosomes. May achieve or facilitate chromosome segregation by condensation DNA from both sides of a centrally located replisome during cell division. The polypeptide is Chromosome partition protein MukB (Escherichia coli O81 (strain ED1a)).